Here is a 211-residue protein sequence, read N- to C-terminus: Ribosomal RNA small subunit methyltransferase G (211 aa).

Residues Gly-73, Phe-78, Val-124–Glu-125, and Arg-137 each bind S-adenosyl-L-methionine.

Belongs to the methyltransferase superfamily. RNA methyltransferase RsmG family.

It localises to the cytoplasm. Specifically methylates the N7 position of a guanine in 16S rRNA. The chain is Ribosomal RNA small subunit methyltransferase G from Christiangramia forsetii (strain DSM 17595 / CGMCC 1.15422 / KT0803) (Gramella forsetii).